Here is a 101-residue protein sequence, read N- to C-terminus: Small ribosomal subunit protein uS14 (101 aa).

Positions 1–11 (MAKKSAIETNE) are enriched in basic and acidic residues. A disordered region spans residues 1–24 (MAKKSAIETNERRRKLSQSKAAKR). Residues 12–24 (RRRKLSQSKAAKR) show a composition bias toward basic residues.

Belongs to the universal ribosomal protein uS14 family. As to quaternary structure, part of the 30S ribosomal subunit. Contacts proteins S3 and S10.

Functionally, binds 16S rRNA, required for the assembly of 30S particles and may also be responsible for determining the conformation of the 16S rRNA at the A site. The polypeptide is Small ribosomal subunit protein uS14 (Azorhizobium caulinodans (strain ATCC 43989 / DSM 5975 / JCM 20966 / LMG 6465 / NBRC 14845 / NCIMB 13405 / ORS 571)).